The chain runs to 45 residues: Large ribosomal subunit protein bL34 (45 aa).

This sequence belongs to the bacterial ribosomal protein bL34 family.

The protein is Large ribosomal subunit protein bL34 of Acidothermus cellulolyticus (strain ATCC 43068 / DSM 8971 / 11B).